The primary structure comprises 268 residues: Hydroxyethylthiazole kinase (268 aa).

M44 is a binding site for substrate. Residues R119 and S165 each coordinate ATP. Residue G192 participates in substrate binding.

The protein belongs to the Thz kinase family. Mg(2+) is required as a cofactor.

The enzyme catalyses 5-(2-hydroxyethyl)-4-methylthiazole + ATP = 4-methyl-5-(2-phosphooxyethyl)-thiazole + ADP + H(+). The protein operates within cofactor biosynthesis; thiamine diphosphate biosynthesis; 4-methyl-5-(2-phosphoethyl)-thiazole from 5-(2-hydroxyethyl)-4-methylthiazole: step 1/1. Catalyzes the phosphorylation of the hydroxyl group of 4-methyl-5-beta-hydroxyethylthiazole (THZ). The sequence is that of Hydroxyethylthiazole kinase from Corynebacterium glutamicum (strain R).